The chain runs to 235 residues: Post-translational flagellin modification protein B (235 aa).

This sequence belongs to the CMP-NeuNAc synthase family.

In terms of biological role, required for biosynthesis of LAH modification in the post-translational modification of Campylobacter coli flagellin. The polypeptide is Post-translational flagellin modification protein B (ptmB) (Campylobacter coli).